Reading from the N-terminus, the 181-residue chain is ATP synthase subunit b, chloroplastic (181 aa).

A helical membrane pass occupies residues 27–49 (LATNPINLSVVLGVVIYFGKGVL).

Belongs to the ATPase B chain family. As to quaternary structure, F-type ATPases have 2 components, F(1) - the catalytic core - and F(0) - the membrane proton channel. F(1) has five subunits: alpha(3), beta(3), gamma(1), delta(1), epsilon(1). F(0) has four main subunits: a(1), b(1), b'(1) and c(10-14). The alpha and beta chains form an alternating ring which encloses part of the gamma chain. F(1) is attached to F(0) by a central stalk formed by the gamma and epsilon chains, while a peripheral stalk is formed by the delta, b and b' chains.

The protein resides in the plastid. Its subcellular location is the chloroplast thylakoid membrane. F(1)F(0) ATP synthase produces ATP from ADP in the presence of a proton or sodium gradient. F-type ATPases consist of two structural domains, F(1) containing the extramembraneous catalytic core and F(0) containing the membrane proton channel, linked together by a central stalk and a peripheral stalk. During catalysis, ATP synthesis in the catalytic domain of F(1) is coupled via a rotary mechanism of the central stalk subunits to proton translocation. Functionally, component of the F(0) channel, it forms part of the peripheral stalk, linking F(1) to F(0). This is ATP synthase subunit b, chloroplastic from Lemna minor (Common duckweed).